A 362-amino-acid polypeptide reads, in one-letter code: Bifunctional chorismate mutase/prephenate dehydratase (362 aa).

One can recognise a Chorismate mutase domain in the interval 3–91; the sequence is QTIDELLIPH…ECLAVERPLT (89 aa). Substrate-binding residues include arginine 13, arginine 30, lysine 41, and glutamate 52. The 178-residue stretch at 92-269 folds into the Prephenate dehydratase domain; the sequence is IAYLGPQGTF…NTTRFLVMGH (178 aa). The 76-residue stretch at 281–356 folds into the ACT domain; sequence SLAVSAPNRA…RASFVKAIGS (76 aa).

Its subcellular location is the cytoplasm. It catalyses the reaction chorismate = prephenate. The enzyme catalyses prephenate + H(+) = 3-phenylpyruvate + CO2 + H2O. It participates in amino-acid biosynthesis; L-phenylalanine biosynthesis; phenylpyruvate from prephenate: step 1/1. Its pathway is metabolic intermediate biosynthesis; prephenate biosynthesis; prephenate from chorismate: step 1/1. Functionally, catalyzes the Claisen rearrangement of chorismate to prephenate and the decarboxylation/dehydration of prephenate to phenylpyruvate. This is Bifunctional chorismate mutase/prephenate dehydratase (pheA) from Neisseria gonorrhoeae (strain ATCC 700825 / FA 1090).